Reading from the N-terminus, the 109-residue chain is Flagellar hook-basal body complex protein FliE (109 aa).

The disordered stretch occupies residues 1 to 38 (MQAIHNDKSLLSPFSELNTDNRTKREESGNAFKEQKGG). The span at 19-38 (TDNRTKREESGNAFKEQKGG) shows a compositional bias: basic and acidic residues.

The protein belongs to the FliE family.

Its subcellular location is the bacterial flagellum basal body. This is Flagellar hook-basal body complex protein FliE from Helicobacter pylori (strain G27).